A 289-amino-acid polypeptide reads, in one-letter code: Ribosomal RNA small subunit methyltransferase A (289 aa).

Residues N21, L23, G48, E69, D94, and N120 each contribute to the S-adenosyl-L-methionine site.

This sequence belongs to the class I-like SAM-binding methyltransferase superfamily. rRNA adenine N(6)-methyltransferase family. RsmA subfamily.

It localises to the cytoplasm. The enzyme catalyses adenosine(1518)/adenosine(1519) in 16S rRNA + 4 S-adenosyl-L-methionine = N(6)-dimethyladenosine(1518)/N(6)-dimethyladenosine(1519) in 16S rRNA + 4 S-adenosyl-L-homocysteine + 4 H(+). In terms of biological role, specifically dimethylates two adjacent adenosines (A1518 and A1519) in the loop of a conserved hairpin near the 3'-end of 16S rRNA in the 30S particle. May play a critical role in biogenesis of 30S subunits. This Actinobacillus pleuropneumoniae serotype 3 (strain JL03) protein is Ribosomal RNA small subunit methyltransferase A.